Here is a 593-residue protein sequence, read N- to C-terminus: Corrinoid activation enzyme RamQ (593 aa).

The region spanning 1–76 (MRVLFPLLEE…GMEIYASREQ (76 aa)) is the 2Fe-2S ferredoxin-type domain. Cys35, Cys41, Cys44, and Cys60 together coordinate [2Fe-2S] cluster.

Requires [2Fe-2S] cluster as cofactor.

Its function is as follows. Involved in the degradation of the quaternary amines L-proline betaine and L-carnitine. Component of a corrinoid-dependent methyltransferase system that transfers a methyl group from L-proline betaine or L-carnitine to tetrahydrofolate (THF), forming methyl-THF, a key intermediate in the Wood-Ljungdahl acetogenesis pathway. RamQ is not required for the methyl transfer, but it stimulates reduction of reconstituted MtqC from the Co(II) state to the Co(I) state in vitro. It also stimulates the rate of THF methylation. In Eubacterium limosum, this protein is Corrinoid activation enzyme RamQ.